A 696-amino-acid chain; its full sequence is Elongation factor G (696 aa).

In terms of domain architecture, tr-type G spans 8-290 (ERYRNIGVMA…AVLDYLPSPA (283 aa)). GTP-binding positions include 17 to 24 (AHIDAGKT), 88 to 92 (DTPGH), and 142 to 145 (NKMD).

The protein belongs to the TRAFAC class translation factor GTPase superfamily. Classic translation factor GTPase family. EF-G/EF-2 subfamily.

It localises to the cytoplasm. Its function is as follows. Catalyzes the GTP-dependent ribosomal translocation step during translation elongation. During this step, the ribosome changes from the pre-translocational (PRE) to the post-translocational (POST) state as the newly formed A-site-bound peptidyl-tRNA and P-site-bound deacylated tRNA move to the P and E sites, respectively. Catalyzes the coordinated movement of the two tRNA molecules, the mRNA and conformational changes in the ribosome. The chain is Elongation factor G from Nitrosospira multiformis (strain ATCC 25196 / NCIMB 11849 / C 71).